The sequence spans 149 residues: 3-dehydroquinate dehydratase (149 aa).

The active-site Proton acceptor is Tyr-24. Asn-76, His-82, and Asp-89 together coordinate substrate. His-102 functions as the Proton donor in the catalytic mechanism. Substrate-binding positions include 103–104 (LS) and Arg-113.

The protein belongs to the type-II 3-dehydroquinase family. Homododecamer.

The catalysed reaction is 3-dehydroquinate = 3-dehydroshikimate + H2O. It participates in metabolic intermediate biosynthesis; chorismate biosynthesis; chorismate from D-erythrose 4-phosphate and phosphoenolpyruvate: step 3/7. In terms of biological role, catalyzes a trans-dehydration via an enolate intermediate. This Acinetobacter baylyi (strain ATCC 33305 / BD413 / ADP1) protein is 3-dehydroquinate dehydratase.